The chain runs to 458 residues: Monomethylamine methyltransferase MtmB1 (458 aa).

Position 202 (pyrrolysine 202) is a non-standard amino acid, pyrrolysine.

It belongs to the monomethylamine methyltransferase family. As to quaternary structure, can form a complex with MtmC.

The enzyme catalyses Co(I)-[methylamine-specific corrinoid protein] + methylamine + H(+) = methyl-Co(III)-[methylamine-specific corrinoid protein] + NH4(+). It functions in the pathway one-carbon metabolism; methanogenesis from methylamine. Catalyzes the transfer of the methyl group from monomethylamine to the corrinoid cofactor of MtmC. This chain is Monomethylamine methyltransferase MtmB1 (mtmB1), found in Methanosarcina acetivorans (strain ATCC 35395 / DSM 2834 / JCM 12185 / C2A).